A 101-amino-acid chain; its full sequence is NAD(P)H-quinone oxidoreductase subunit 4L, chloroplastic (101 aa).

Helical transmembrane passes span 2–22 (MLEH…YGLI), 32–52 (MCLE…SDFF), and 61–81 (IFSI…PAIV).

Belongs to the complex I subunit 4L family. NDH is composed of at least 16 different subunits, 5 of which are encoded in the nucleus.

The protein resides in the plastid. It is found in the chloroplast thylakoid membrane. It catalyses the reaction a plastoquinone + NADH + (n+1) H(+)(in) = a plastoquinol + NAD(+) + n H(+)(out). The enzyme catalyses a plastoquinone + NADPH + (n+1) H(+)(in) = a plastoquinol + NADP(+) + n H(+)(out). In terms of biological role, NDH shuttles electrons from NAD(P)H:plastoquinone, via FMN and iron-sulfur (Fe-S) centers, to quinones in the photosynthetic chain and possibly in a chloroplast respiratory chain. The immediate electron acceptor for the enzyme in this species is believed to be plastoquinone. Couples the redox reaction to proton translocation, and thus conserves the redox energy in a proton gradient. The sequence is that of NAD(P)H-quinone oxidoreductase subunit 4L, chloroplastic from Manihot esculenta (Cassava).